We begin with the raw amino-acid sequence, 640 residues long: MTADIAATPAETPATNGHGDAHSTASFTALTLGSIGVVYGDIGTSPLYALREAVMAASSGGEAAPHAVMGVVSLILWALIVVVTLKYVVILLRADNHGEGGTLALMALAQRGVARGASIIVLLGIISGALFYGDAVITPALSVLSAIEGIKLVTAAFDPYVVPLTIIILVMLFAVQVRGTAKVAAFFGPIMLIWFLVIGIAAFPPILRHPEVLWAINPLHAVSFMLHHGIIGFITLGAVFLAVTGAEALYADLGHFGKRPIQTAWLFVVLPSLALNYLGQGALVIADAKAIENPFFLMFPDWALIPMVALATVATVIASQAVITGAYSLTRQAIQLGLLPRFEIRHTSEAHSGQIYIPRINKLLLVSVVLLVLLFKSSSALASAYGISVTGTMVVTAMMGFVVIWKVWRWSPIAAGALIAPFLFLDLTFLSANLLKVLEGGWVPLALGGFVMTLMYTWRRGSRLLFDKSRKLEFPLADLVAMLEKRPPQRVAGTAVFLTSDPLSAPTALMHSLKHYKVLHEKNVILTIETAPTPRIDPSERVRLEQISPTFSKVTLRFGFMESPNVPKALAIARKLGWQFDIMSTSFFLSRRALKPAAHSGMPRWQDHLFITMSRSANDATDYFQIPSGRVVEVGTQVTI.

Residues 1–20 (MTADIAATPAETPATNGHGD) form a disordered region. 12 helical membrane-spanning segments follow: residues 30–50 (LTLG…LYAL), 71–91 (VVSL…VVIL), 117–137 (ASII…DAVI), 155–175 (AAFD…LFAV), 183–203 (VAAF…IAAF), 224–244 (FMLH…LAVT), 265–285 (WLFV…ALVI), 294–314 (PFFL…ATVA), 363–383 (LLLV…ALAS), 385–405 (YGIS…VVIW), 410–430 (WSPI…LTFL), and 437–457 (VLEG…LMYT).

The protein belongs to the HAK/KUP transporter (TC 2.A.72) family.

Its subcellular location is the cell inner membrane. The enzyme catalyses K(+)(in) + H(+)(in) = K(+)(out) + H(+)(out). In terms of biological role, transport of potassium into the cell. Likely operates as a K(+):H(+) symporter. The polypeptide is Probable potassium transport system protein Kup 2 (Bradyrhizobium sp. (strain ORS 278)).